A 477-amino-acid polypeptide reads, in one-letter code: MSKKLHIKTWGCQMNEYDSSKMADLLDASNGYTLTEEPEEADVLLLNTCSIREKAQEKVFHQLGRWKKLKANKPGLVIGVGGCVASQEGENIRSRAPYVDIVFGPQTLHRLPAMIKQVQEGRGAQVDIAFPEIEKFDSLPEPRAEGATAFVSIMEGCSKYCSFCVVPYTRGEEVSRPMDDVLYEIAQLAEQGVREVNLLGQNVNAYRGPTFDGSICSFAELLRLVAAIDGIDRIRYTTSHPIEFTDDIIEVYKDTPEVVSFLHLPVQSGSDRILTMMKRPHTVLEYKSKIRRLRAARPDITISSDFIVGFPNETDEDFEATMKLIEEINFDMSFSFIYSPRPGTPAADMPDDVDMEVKKVRLARLQHVINNQSMQIGRAMLGSTQRILVEGPSRLDPMQLCGRTENNRVVNFEGAHTLIGGFADVEITEVRPNSLRGRFIRGEDEMNLRIATAPREILARRPDNVPDALGVAAFTPH.

The region spanning 3-120 (KKLHIKTWGC…LPAMIKQVQE (118 aa)) is the MTTase N-terminal domain. [4Fe-4S] cluster-binding residues include Cys12, Cys49, Cys83, Cys157, Cys161, and Cys164. The 233-residue stretch at 143–375 (RAEGATAFVS…QHVINNQSMQ (233 aa)) folds into the Radical SAM core domain. The TRAM domain maps to 378–441 (RAMLGSTQRI…PNSLRGRFIR (64 aa)).

Belongs to the methylthiotransferase family. MiaB subfamily. In terms of assembly, monomer. It depends on [4Fe-4S] cluster as a cofactor.

Its subcellular location is the cytoplasm. The catalysed reaction is N(6)-dimethylallyladenosine(37) in tRNA + (sulfur carrier)-SH + AH2 + 2 S-adenosyl-L-methionine = 2-methylsulfanyl-N(6)-dimethylallyladenosine(37) in tRNA + (sulfur carrier)-H + 5'-deoxyadenosine + L-methionine + A + S-adenosyl-L-homocysteine + 2 H(+). In terms of biological role, catalyzes the methylthiolation of N6-(dimethylallyl)adenosine (i(6)A), leading to the formation of 2-methylthio-N6-(dimethylallyl)adenosine (ms(2)i(6)A) at position 37 in tRNAs that read codons beginning with uridine. This Aeromonas salmonicida (strain A449) protein is tRNA-2-methylthio-N(6)-dimethylallyladenosine synthase.